Consider the following 1894-residue polypeptide: Adenylate kinase 9 (1894 aa).

Residues 32 to 286 (TCFIIFGKPG…LFMTVIERLK (255 aa)) form an adenylate kinase 1 region. Residue 41–46 (GAGKTT) coordinates ATP. An NMP 1 region spans residues 61–90 (EALSVLEEHIAAEKETGAMLQSLLVSGHSI). 117-120 (EMPS) is a binding site for AMP. The tract at residues 161–206 (GQRQHSTTGYVYTREQWDPEIIESRRRKKRDFPKEGKSEEEEEEEE) is LID 1. A disordered region spans residues 188-211 (KKRDFPKEGKSEEEEEEEEQEEEE). A compositionally biased stretch (acidic residues) spans 198–211 (SEEEEEEEEQEEEE). Arg-230 lines the AMP pocket. Residues 451 to 478 (IKVVQQRLLNEKQAKQQEERTLKELQVQ) adopt a coiled-coil conformation. Residues 492–533 (SEELPSLENTGSKLSSLEIGQEDKSKSETTITGDQVKDVSTE) form a disordered region. The stretch at 651–691 (LERLQEEAQAKKREEEEIRKVKEEELRLEEEKQRLMELATK) forms a coiled coil. Disordered regions lie at residues 710 to 789 (PYPD…LGSE) and 876 to 911 (EEEA…EKRR). Residues 715–736 (PDNEAEEEVEDSEIHEESEAQE) are compositionally biased toward acidic residues. 2 stretches are compositionally biased toward basic and acidic residues: residues 757-768 (EGDHEPEAEFKP) and 777-789 (ETEK…LGSE). Over residues 876-903 (EEEAEDYQAETEIDEEQEEEEEEEEEGE) the composition is skewed to acidic residues. Residues 976 to 1187 (LRICLLGPHG…VAKRRAELIL (212 aa)) form an adenylate kinase 2 region. ATP is bound at residue 985 to 990 (GSGKTV). An NMP 2 region spans residues 1005 to 1036 (QFDEFLQEKMLLKAERKFGPEFEDDSEEEQLV). AMP is bound by residues 1034-1036 (QLV) and 1063-1066 (VQLT). The interval 1108-1128 (DGFPRHPEEAQFLGERGFFPD) is LID 2. Residues 1223–1241 (EFPKDEEEMSEEDEEQEAD) are compositionally biased toward acidic residues. Positions 1223 to 1243 (EFPKDEEEMSEEDEEQEADAT) are disordered. The tract at residues 1395-1584 (VRIMIVGPPK…VWNEVLKDIQ (190 aa)) is adenylate kinase 3. 1404 to 1409 (KSGKTT) is a binding site for ATP. Positions 1424 to 1455 (SVGDALRGMLNNHPDSELSLMLNWHLHKGKTV) are NMP 3. AMP contacts are provided by residues Arg-1430, 1482–1485 (GYPV), and Gln-1489. The segment at 1519 to 1533 (LEKKTEQSMSYPLHN) is LID 3.

It belongs to the adenylate kinase family. Highly expressed in the testis.

It localises to the cytoplasm. It is found in the nucleus. The protein resides in the cell projection. The protein localises to the cilium. Its subcellular location is the flagellum. The enzyme catalyses a ribonucleoside 5'-phosphate + ATP = a ribonucleoside 5'-diphosphate + ADP. The catalysed reaction is AMP + ATP = 2 ADP. It carries out the reaction GTP + AMP = GDP + ADP. It catalyses the reaction CMP + ATP = CDP + ADP. The enzyme catalyses GTP + CMP = CDP + GDP. The catalysed reaction is dAMP + ATP = dADP + ADP. It carries out the reaction dCMP + ATP = dCDP + ADP. It catalyses the reaction a ribonucleoside 5'-diphosphate + ATP = a ribonucleoside 5'-triphosphate + ADP. The enzyme catalyses CDP + ATP = CTP + ADP. The catalysed reaction is CDP + GTP = CTP + GDP. It carries out the reaction GDP + ATP = GTP + ADP. It catalyses the reaction UDP + ATP = UTP + ADP. The enzyme catalyses GTP + UDP = UTP + GDP. The catalysed reaction is dTDP + GTP = dTTP + GDP. It carries out the reaction dCDP + ATP = dCTP + ADP. It catalyses the reaction dCDP + GTP = dCTP + GDP. The enzyme catalyses dGDP + ATP = dGTP + ADP. The catalysed reaction is dTDP + ATP = dTTP + ADP. It carries out the reaction dADP + GTP = dATP + GDP. Its function is as follows. Broad-specificity nucleoside phosphate kinase involved in cellular nucleotide homeostasis by catalyzing nucleoside-phosphate interconversions. Similar to other adenylate kinases, preferentially catalyzes the phosphorylation of the nucleoside monophosphate AMP with ATP as phosphate donor to produce ADP. In vitro, can also catalyze the phosphorylation of CMP, dAMP and dCMP and use GTP as an alternate phosphate donor. Moreover, exhibits a diphosphate kinase activity, producing ATP, CTP, GTP, UTP, TTP, dATP, dCTP and dGTP from the corresponding diphosphate substrates with either ATP or GTP as phosphate donors. For this activity shows the following substrate preference CDP &gt; UDP &gt; ADP &gt; TDP. The protein is Adenylate kinase 9 of Mus musculus (Mouse).